Here is a 182-residue protein sequence, read N- to C-terminus: Crossover junction endodeoxyribonuclease RuvC (182 aa).

Active-site residues include aspartate 7, glutamate 69, and aspartate 141. Aspartate 7, glutamate 69, and aspartate 141 together coordinate Mg(2+).

This sequence belongs to the RuvC family. In terms of assembly, homodimer which binds Holliday junction (HJ) DNA. The HJ becomes 2-fold symmetrical on binding to RuvC with unstacked arms; it has a different conformation from HJ DNA in complex with RuvA. In the full resolvosome a probable DNA-RuvA(4)-RuvB(12)-RuvC(2) complex forms which resolves the HJ. Mg(2+) serves as cofactor.

Its subcellular location is the cytoplasm. It carries out the reaction Endonucleolytic cleavage at a junction such as a reciprocal single-stranded crossover between two homologous DNA duplexes (Holliday junction).. In terms of biological role, the RuvA-RuvB-RuvC complex processes Holliday junction (HJ) DNA during genetic recombination and DNA repair. Endonuclease that resolves HJ intermediates. Cleaves cruciform DNA by making single-stranded nicks across the HJ at symmetrical positions within the homologous arms, yielding a 5'-phosphate and a 3'-hydroxyl group; requires a central core of homology in the junction. The consensus cleavage sequence is 5'-(A/T)TT(C/G)-3'. Cleavage occurs on the 3'-side of the TT dinucleotide at the point of strand exchange. HJ branch migration catalyzed by RuvA-RuvB allows RuvC to scan DNA until it finds its consensus sequence, where it cleaves and resolves the cruciform DNA. The polypeptide is Crossover junction endodeoxyribonuclease RuvC (Paracidovorax citrulli (strain AAC00-1) (Acidovorax citrulli)).